Here is a 307-residue protein sequence, read N- to C-terminus: MKNVEKYLEYAPEVKKAIAEGRPIVALESTIISHGMPYPQNVETAKKVEDMIREGGAVPATIAIVKGKIKVGLTEEELMFLGQSKDVVKASRRDLPLIIAKELNGATTVASTMIIAALAGIKVFVTGGIGGVHRGAQETLDISADLMELAQTNVAVVCAGVKSILDIGLTLEVLETHGVPIVGYQTEDFPAFYTRKSGYGVDYAVANVEELARALKAKWDLDLKGGVVVANPIPEAYAMDEALITQAIDEAVQEAAAKGIQGKETTPFLLTKIKEITEGKSLESNIELVFNNAKIGAELAVALHRLS.

The Proton donor role is filled by glutamate 28. Substrate-binding residues include lysine 89 and valine 109. Aspartate 141 is a Mn(2+) binding site. 143–145 lines the substrate pocket; that stretch reads SAD. Lysine 162 functions as the Nucleophile in the catalytic mechanism.

This sequence belongs to the pseudouridine-5'-phosphate glycosidase family. Homotrimer. It depends on Mn(2+) as a cofactor.

It catalyses the reaction D-ribose 5-phosphate + uracil = psi-UMP + H2O. In terms of biological role, catalyzes the reversible cleavage of pseudouridine 5'-phosphate (PsiMP) to ribose 5-phosphate and uracil. Functions biologically in the cleavage direction, as part of a pseudouridine degradation pathway. This chain is Pseudouridine-5'-phosphate glycosidase, found in Alkaliphilus metalliredigens (strain QYMF).